The primary structure comprises 156 residues: MGETTEGKVVAQNKKARHDYFIEETFEAGIVLTGTEIKSIRAGKMNLKDSFARIKNGEAFLYNAHISEYEQGNRYNHEPTRPRKLLLHKKQINTLIGQTQQKGYSIVPLKVYIKNGFAKVLIGLAKGKKNYDKRETLRRKDAKREVERAIKERMRG.

It belongs to the SmpB family.

The protein localises to the cytoplasm. Required for rescue of stalled ribosomes mediated by trans-translation. Binds to transfer-messenger RNA (tmRNA), required for stable association of tmRNA with ribosomes. tmRNA and SmpB together mimic tRNA shape, replacing the anticodon stem-loop with SmpB. tmRNA is encoded by the ssrA gene; the 2 termini fold to resemble tRNA(Ala) and it encodes a 'tag peptide', a short internal open reading frame. During trans-translation Ala-aminoacylated tmRNA acts like a tRNA, entering the A-site of stalled ribosomes, displacing the stalled mRNA. The ribosome then switches to translate the ORF on the tmRNA; the nascent peptide is terminated with the 'tag peptide' encoded by the tmRNA and targeted for degradation. The ribosome is freed to recommence translation, which seems to be the essential function of trans-translation. The sequence is that of SsrA-binding protein from Shouchella clausii (strain KSM-K16) (Alkalihalobacillus clausii).